A 329-amino-acid polypeptide reads, in one-letter code: MQTLAENLTSQAISPTLEKLILTLANTSKEISHAVRHGALAGVLGATEQENVQGETQKKLDIITNDMLKDALKADGTVRGIASEEEDYVVEADANGEFLVCFDPLDGSSNIDINSLVGTIFSVLPAPAGELTEKSFLQAGHNQVAAGYVLYGPSTMLALTTGQGVQLFTLNPETNQFLLTNAAMAVSKDTGEFAINMSNQRFWEAPMQTYISDLLLGKIGPREKSFNMRWIAAMVGDVHRVLCRGGIFTYPTDNKNPEKPYKLRLMYEANPMAFLVEQAGGKASTGYETIMDIEPTAIHQRVAVILGSANEVDACLEYHGIDYSEEPAL.

Residues Glu-84, Asp-103, Leu-105, and Asp-106 each contribute to the Mg(2+) site. Residues 106-109 (DGSS), Asn-196, and Lys-262 each bind substrate. A Mg(2+)-binding site is contributed by Glu-268.

Belongs to the FBPase class 1 family. In terms of assembly, homotetramer. Requires Mg(2+) as cofactor.

Its subcellular location is the cytoplasm. The enzyme catalyses beta-D-fructose 1,6-bisphosphate + H2O = beta-D-fructose 6-phosphate + phosphate. It functions in the pathway carbohydrate biosynthesis; gluconeogenesis. The sequence is that of Fructose-1,6-bisphosphatase class 1 from Shewanella halifaxensis (strain HAW-EB4).